We begin with the raw amino-acid sequence, 450 residues long: Phosphopentomutase (450 aa).

Serine 93 functions as the Phosphoserine intermediate in the catalytic mechanism. Residues serine 93, aspartate 231, aspartate 233, and aspartate 235 each coordinate Mg(2+). Serine 93 is subject to Phosphoserine; by autocatalysis.

This sequence belongs to the phosphohexose mutase family. As to quaternary structure, homotetramer. The cofactor is Mg(2+). In terms of processing, activated by phosphorylation.

The catalysed reaction is alpha-D-ribose 1-phosphate = D-ribose 5-phosphate. It catalyses the reaction 2-deoxy-alpha-D-ribose 1-phosphate = 2-deoxy-D-ribose 5-phosphate. In terms of biological role, catalyzes the conversion of deoxyribose 1-phosphate to deoxyribose 5-phosphate. Also shows weak activity with glucose 1-phosphate and mannose 1-phosphate. Could be involved in pentose biosynthesis. The protein is Phosphopentomutase of Thermococcus kodakarensis (strain ATCC BAA-918 / JCM 12380 / KOD1) (Pyrococcus kodakaraensis (strain KOD1)).